Here is a 119-residue protein sequence, read N- to C-terminus: Large ribosomal subunit protein uL24 (119 aa).

The protein belongs to the universal ribosomal protein uL24 family. As to quaternary structure, part of the 50S ribosomal subunit.

One of two assembly initiator proteins, it binds directly to the 5'-end of the 23S rRNA, where it nucleates assembly of the 50S subunit. In terms of biological role, one of the proteins that surrounds the polypeptide exit tunnel on the outside of the subunit. The polypeptide is Large ribosomal subunit protein uL24 (Sulfurihydrogenibium sp. (strain YO3AOP1)).